We begin with the raw amino-acid sequence, 836 residues long: MAVVIRLLGLPFIAGPVDIRHFFKGLTIPDGGVHIIGGKVGEAFIIFATDEDARRAISRSGGFIKDSSVELFLSSKVEMQKTIEMKRTARVGRGRPGSGASGVGNVYHFSDALKEEESYSGYGSSVNRDAGFHTNGTGLDLRPRKTRPLKAENPYLFLRGLPYLVNEDDVRVFFSGLCVDGVILLKHHDGRNNGDAIVKFASCVDASGGLKCHRSFMGSRFIEVMQGSEQQWIEFGGTATEGGDTPRMRSEEHSPSRRINGRHFRKRSHSKSPRARSRSPLGFYVHLKNLSLNTNKRDLRNLFRDTDLTNDQIKFVYKDERRTRYAFVMFKNQKDYNTALGLHKTVLQYRPVLIDPVSRKEMVRIIECYEKKRPESLEKERPGRVSQKYSQEGFSGSGQKLCIYIRNLPFDVTKGEVQKFFADFSLVEDDIYLLCDDKGVGLGEALVRFKSEEQAMKAERLNRQRFLGIEVLLRLISEEQMQEFGVKSSWLSNERTQACSRSHDGDDCSCLFDLKDPSSCSFGQSESLRYHPKDLRKMGHFKHPQGYFRQSDRRSPEDFRHSPEDYRHPWEEHTSHSREEDWRLPLEDWKWSQEDDFRQCHEKDRRQLRSPWEEDFRRPSQEHFRRSYQEHIRQPPEEHFRRSREEDFRHVADEDFRQASDEDFRTSQEDLRYPTDEDFRRVSVEDLREVPEKDLRLPKNFRSPGEEFWTPPDFRGQHPFGNFDHLQGGKFDFEKYKFGSFPDAKVTSDLNLNCVSDKIIPVKISNLPFKANASEILDFFHGYKVIPDSVSLQYNEQGLPIGEAIVAMTNYNEALAAVKDLSGRPVGPRKVKLSLL.

The region spanning 154-229 (PYLFLRGLPY…RFIEVMQGSE (76 aa)) is the RRM 1 domain. Positions 237-277 (GTATEGGDTPRMRSEEHSPSRRINGRHFRKRSHSKSPRARS) are disordered. Basic and acidic residues predominate over residues 244–255 (DTPRMRSEEHSP). Over residues 259–277 (INGRHFRKRSHSKSPRARS) the composition is skewed to basic residues. 2 RRM domains span residues 283 to 359 (FYVH…PVSR) and 401 to 478 (LCIY…LISE). 2 disordered regions span residues 539–572 (GHFK…PWEE) and 620–644 (SQEH…RRSR). Positions 550–572 (QSDRRSPEDFRHSPEDYRHPWEE) are enriched in basic and acidic residues. A Phosphoserine modification is found at serine 703. Lysine 758 is subject to N6-acetyllysine. The RRM 4 domain occupies 760 to 836 (IPVKISNLPF…GPRKVKLSLL (77 aa)).

This Mus musculus (Mouse) protein is RNA-binding protein 12B-A (Rbm12b1).